Here is a 157-residue protein sequence, read N- to C-terminus: 6,7-dimethyl-8-ribityllumazine synthase (157 aa).

Residues F30, A64–E66, and C88–I90 each bind 5-amino-6-(D-ribitylamino)uracil. E93–T94 serves as a coordination point for (2S)-2-hydroxy-3-oxobutyl phosphate. Residue H96 is the Proton donor of the active site. N121 contributes to the 5-amino-6-(D-ribitylamino)uracil binding site. R135 lines the (2S)-2-hydroxy-3-oxobutyl phosphate pocket.

It belongs to the DMRL synthase family.

It carries out the reaction (2S)-2-hydroxy-3-oxobutyl phosphate + 5-amino-6-(D-ribitylamino)uracil = 6,7-dimethyl-8-(1-D-ribityl)lumazine + phosphate + 2 H2O + H(+). Its pathway is cofactor biosynthesis; riboflavin biosynthesis; riboflavin from 2-hydroxy-3-oxobutyl phosphate and 5-amino-6-(D-ribitylamino)uracil: step 1/2. In terms of biological role, catalyzes the formation of 6,7-dimethyl-8-ribityllumazine by condensation of 5-amino-6-(D-ribitylamino)uracil with 3,4-dihydroxy-2-butanone 4-phosphate. This is the penultimate step in the biosynthesis of riboflavin. This chain is 6,7-dimethyl-8-ribityllumazine synthase, found in Albidiferax ferrireducens (strain ATCC BAA-621 / DSM 15236 / T118) (Rhodoferax ferrireducens).